The chain runs to 156 residues: Small ribosomal subunit protein uS7 (156 aa).

The protein belongs to the universal ribosomal protein uS7 family. In terms of assembly, part of the 30S ribosomal subunit. Contacts proteins S9 and S11.

Its function is as follows. One of the primary rRNA binding proteins, it binds directly to 16S rRNA where it nucleates assembly of the head domain of the 30S subunit. Is located at the subunit interface close to the decoding center, probably blocks exit of the E-site tRNA. This is Small ribosomal subunit protein uS7 from Vibrio vulnificus (strain CMCP6).